The sequence spans 245 residues: NAD-dependent protein deacetylase (245 aa).

The region spanning 1–245 is the Deacetylase sirtuin-type domain; the sequence is MIFVQQFEEV…EFVEGLSSMK (245 aa). Positions 26, 30, 37, 38, 105, 107, 108, and 123 each coordinate NAD(+). F37 contributes to the nicotinamide binding site. Positions 107 and 108 each coordinate nicotinamide. The Proton acceptor role is filled by H123. C131, C134, C151, and C154 together coordinate Zn(2+). NAD(+) contacts are provided by T190, S191, N216, and I234.

This sequence belongs to the sirtuin family. Class U subfamily. Zn(2+) serves as cofactor.

The protein resides in the cytoplasm. The enzyme catalyses N(6)-acetyl-L-lysyl-[protein] + NAD(+) + H2O = 2''-O-acetyl-ADP-D-ribose + nicotinamide + L-lysyl-[protein]. NAD-dependent protein deacetylase which modulates the activities of several enzymes which are inactive in their acetylated form. This is NAD-dependent protein deacetylase from Bacillus cereus (strain ATCC 14579 / DSM 31 / CCUG 7414 / JCM 2152 / NBRC 15305 / NCIMB 9373 / NCTC 2599 / NRRL B-3711).